Reading from the N-terminus, the 636-residue chain is Threonine--tRNA ligase (636 aa).

Positions 1 to 61 (MPVITLPDGS…TQDASLQLIT (61 aa)) constitute a TGS domain. Positions 243-534 (DHRKIGKTLD…LIEEFTGKFP (292 aa)) are catalytic. Residues Cys334, His385, and His511 each coordinate Zn(2+).

It belongs to the class-II aminoacyl-tRNA synthetase family. As to quaternary structure, homodimer. Requires Zn(2+) as cofactor.

Its subcellular location is the cytoplasm. It carries out the reaction tRNA(Thr) + L-threonine + ATP = L-threonyl-tRNA(Thr) + AMP + diphosphate + H(+). Its function is as follows. Catalyzes the attachment of threonine to tRNA(Thr) in a two-step reaction: L-threonine is first activated by ATP to form Thr-AMP and then transferred to the acceptor end of tRNA(Thr). Also edits incorrectly charged L-seryl-tRNA(Thr). The protein is Threonine--tRNA ligase of Colwellia psychrerythraea (strain 34H / ATCC BAA-681) (Vibrio psychroerythus).